The primary structure comprises 134 residues: Protein LctB (134 aa).

This Bacillus caldotenax protein is Protein LctB (lctB).